The following is a 624-amino-acid chain: UvrABC system protein C (624 aa).

Positions 27-105 (LSPGVYRMLS…IKSLGPRYNI (79 aa)) constitute a GIY-YIG domain. Residues 215–250 (RRVQHDLTARMESAAEAMEYEAAAVFRDRIRALTRI) enclose the UVR domain.

It belongs to the UvrC family. In terms of assembly, interacts with UvrB in an incision complex.

It is found in the cytoplasm. Functionally, the UvrABC repair system catalyzes the recognition and processing of DNA lesions. UvrC both incises the 5' and 3' sides of the lesion. The N-terminal half is responsible for the 3' incision and the C-terminal half is responsible for the 5' incision. This chain is UvrABC system protein C, found in Paramagnetospirillum magneticum (strain ATCC 700264 / AMB-1) (Magnetospirillum magneticum).